Here is a 475-residue protein sequence, read N- to C-terminus: Homeobox even-skipped homolog protein 2 (475 aa).

Disordered regions lie at residues 82–113 and 155–189; these read PSSE…AEAD and TSAS…SGAD. The segment covering 83 to 96 has biased composition (low complexity); it reads SSESTVSSEIASAT. Gly residues predominate over residues 160-186; sequence SGLGSLHGGGGGGNSGAAALGGSGSGS. The segment at residues 191-250 is a DNA-binding region (homeobox); it reads VRRYRTAFTREQIARLEKEFYRENYVSRPRRCELAAALNLPETTIKVWFQNRRMKDKRQR.

The protein belongs to the even-skipped homeobox family.

Its subcellular location is the nucleus. This is Homeobox even-skipped homolog protein 2 (Evx2) from Mus musculus (Mouse).